The sequence spans 50 residues: Large ribosomal subunit protein bL33B (50 aa).

It belongs to the bacterial ribosomal protein bL33 family.

The polypeptide is Large ribosomal subunit protein bL33B (Metamycoplasma arthritidis (strain 158L3-1) (Mycoplasma arthritidis)).